A 64-amino-acid chain; its full sequence is Alpha-like toxin Lqh6 (64 aa).

An LCN-type CS-alpha/beta domain is found at 2 to 63 (RDGYIAQPEN…GIIVDGVKCH (62 aa)). Disulfide bonds link Cys12-Cys62, Cys16-Cys34, Cys20-Cys44, and Cys24-Cys46. The residue at position 64 (Lys64) is a Lysine amide.

It belongs to the long (4 C-C) scorpion toxin superfamily. Sodium channel inhibitor family. Alpha subfamily. Expressed by the venom gland.

Its subcellular location is the secreted. Functionally, alpha toxins bind voltage-independently at site-3 of sodium channels (Nav) and inhibit the inactivation of the activated channels, thereby blocking neuronal transmission. This toxin is highly toxic to insects and mice, and inhibits the binding of alpha-toxin to cockroach neuronal membranes. The polypeptide is Alpha-like toxin Lqh6 (Leiurus hebraeus (Hebrew deathstalker scorpion)).